The primary structure comprises 116 residues: Large ribosomal subunit protein bL17 (116 aa).

This sequence belongs to the bacterial ribosomal protein bL17 family. As to quaternary structure, part of the 50S ribosomal subunit. Contacts protein L32.

This is Large ribosomal subunit protein bL17 from Helicobacter acinonychis (strain Sheeba).